The chain runs to 128 residues: Putative protein SEM1, isoform 2 (128 aa).

A compositionally biased stretch (basic residues) spans 22–32; that stretch reads KHGIKRGRRPS. The disordered stretch occupies residues 22 to 42; that stretch reads KHGIKRGRRPSIRSPAQRARG.

The polypeptide is Putative protein SEM1, isoform 2 (Homo sapiens (Human)).